A 236-amino-acid chain; its full sequence is Lipoarabinomannan carrier protein LprG (236 aa).

Positions 1–25 (MQTRPRFAVQSLFAILATAAALVAG) are cleaved as a signal peptide. The N-palmitoyl cysteine moiety is linked to residue cysteine 26. Residue cysteine 26 is the site of S-diacylglycerol cysteine attachment.

This sequence belongs to the LppX/LprAFG lipoprotein family. Interacts with itself, Ag85A (MSMEG_6398), LppI (MSMEG_3851) and LppK (MSMEG_3904) in vivo.

It is found in the cell inner membrane. Its subcellular location is the secreted. It localises to the cell wall. In terms of biological role, helps membrane protein MSMEG_3069/MSMEI_2992 (P55) transport triacylglycerides (TAG) across the inner cell membrane into the periplasm and probably ultimately to the outer membrane. Binds TAG in its hydrophobic cavity and transfers it between lipid bilayers. TAG probably regulates lipid metabolism and growth regulation and plays a structural role in the outer membrane. Also binds mannosides, lipoarabinomannan and lipomannan and various glycolipids in the same cavity. Required for MSMEG_3069/MSMEI_2992 export activity. Export of ethidium bromide by MSMEG_3069/MSMEI_2992 can be complemented by the equivalent operon from M.tuberculosis (lprG-Rv1410c). Involved in mycolylation. The sequence is that of Lipoarabinomannan carrier protein LprG from Mycolicibacterium smegmatis (strain ATCC 700084 / mc(2)155) (Mycobacterium smegmatis).